Consider the following 504-residue polypeptide: Maturase K (504 aa).

Belongs to the intron maturase 2 family. MatK subfamily.

It is found in the plastid. Its subcellular location is the chloroplast. Its function is as follows. Usually encoded in the trnK tRNA gene intron. Probably assists in splicing its own and other chloroplast group II introns. The polypeptide is Maturase K (Aucuba japonica (Japanese laurel)).